Consider the following 209-residue polypeptide: Casparian strip membrane protein 1 (209 aa).

The Cytoplasmic segment spans residues 1–46 (MSSGANATTIDVPETRAEAKGKAPLIAAPIVATTKATPHPNAGWKK). Residues 47 to 67 (GLAIFDFLLRLAAIAATLAAA) form a helical membrane-spanning segment. The Extracellular portion of the chain corresponds to 68-95 (TTMGTTDETLPFFTQFFQFQASFDDLPA). Residues 96–116 (FMFFVVATAIASGYLALSLPF) form a helical membrane-spanning segment. The Cytoplasmic segment spans residues 117 to 137 (SLVSIFRPHAQGIRLLLIISD). The chain crosses the membrane as a helical span at residues 138–158 (TVMLALTTAGAASATAIVYLA). Topologically, residues 159 to 183 (HNGDSSANWIAICQQFTDFCQSVSG) are extracellular. A helical transmembrane segment spans residues 184–204 (AVVASFIAVVIFMLLVMMSAL). The Cytoplasmic segment spans residues 205–209 (ALRKH).

This sequence belongs to the Casparian strip membrane proteins (CASP) family. As to quaternary structure, homodimer and heterodimers.

The protein localises to the cell membrane. Functionally, regulates membrane-cell wall junctions and localized cell wall deposition. Required for establishment of the Casparian strip membrane domain (CSD) and the subsequent formation of Casparian strips, a cell wall modification of the root endodermis that determines an apoplastic barrier between the intraorganismal apoplasm and the extraorganismal apoplasm and prevents lateral diffusion. This chain is Casparian strip membrane protein 1, found in Vitis vinifera (Grape).